The chain runs to 125 residues: Fumarate reductase subunit D (125 aa).

Transmembrane regions (helical) follow at residues 30 to 50 (FAMI…LGVI), 63 to 83 (FATS…PMWH), and 105 to 125 (IACY…IFMI).

This sequence belongs to the FrdD family. In terms of assembly, part of an enzyme complex containing four subunits: a flavoprotein (FrdA), an iron-sulfur protein (FrdB), and two hydrophobic anchor proteins (FrdC and FrdD).

The protein localises to the cell inner membrane. Anchors the catalytic components of the fumarate reductase complex to the cell membrane, binds quinones. This chain is Fumarate reductase subunit D, found in Vibrio campbellii (strain ATCC BAA-1116).